Reading from the N-terminus, the 429-residue chain is 5-methylthioadenosine/S-adenosylhomocysteine deaminase (429 aa).

Zn(2+) is bound by residues His-65 and His-67. 2 residues coordinate substrate: Glu-94 and His-182. Zn(2+) is bound at residue His-209. Substrate is bound by residues Glu-212 and Asp-297. Asp-297 provides a ligand contact to Zn(2+).

Belongs to the metallo-dependent hydrolases superfamily. MTA/SAH deaminase family. It depends on Zn(2+) as a cofactor.

It carries out the reaction S-adenosyl-L-homocysteine + H2O + H(+) = S-inosyl-L-homocysteine + NH4(+). The catalysed reaction is S-methyl-5'-thioadenosine + H2O + H(+) = S-methyl-5'-thioinosine + NH4(+). Its function is as follows. Catalyzes the deamination of 5-methylthioadenosine and S-adenosyl-L-homocysteine into 5-methylthioinosine and S-inosyl-L-homocysteine, respectively. Is also able to deaminate adenosine. The chain is 5-methylthioadenosine/S-adenosylhomocysteine deaminase from Clostridium tetani (strain Massachusetts / E88).